A 452-amino-acid polypeptide reads, in one-letter code: Bifunctional F420 biosynthesis protein FbiB (452 aa).

Positions 1–248 are coenzyme F420:L-glutamate ligase; sequence MVSAPGDHAG…AGEEDLFWLG (248 aa). GTP is bound by residues 24–27, serine 54, and lysine 59; that span reads LPEF. Aspartate 113 is a binding site for a divalent metal cation. GTP is bound at residue asparagine 116. The a divalent metal cation site is built by aspartate 154 and threonine 155. The dehydro-coenzyme F420-0 reductase stretch occupies residues 249–452; sequence TAEAVERGRR…RDPGDGLVER (204 aa). FMN contacts are provided by residues 264–268 and alanine 292; that span reads RRSVR. Aspartate 324 contacts coenzyme F420-(gamma-Glu)n. FMN-binding residues include glycine 403 and arginine 440.

It in the N-terminal section; belongs to the CofE family. It depends on Mg(2+) as a cofactor. Requires Mn(2+) as cofactor. K(+) serves as cofactor.

It carries out the reaction oxidized coenzyme F420-0 + GTP + L-glutamate = oxidized coenzyme F420-1 + GDP + phosphate + H(+). The enzyme catalyses oxidized coenzyme F420-0 + FMN + H(+) = dehydro coenzyme F420-0 + FMNH2. The catalysed reaction is oxidized coenzyme F420-1 + GTP + L-glutamate = oxidized coenzyme F420-2 + GDP + phosphate + H(+). Its pathway is cofactor biosynthesis; coenzyme F420 biosynthesis. Functionally, bifunctional enzyme that catalyzes the GTP-dependent successive addition of two or more gamma-linked L-glutamates to the L-lactyl phosphodiester of 7,8-didemethyl-8-hydroxy-5-deazariboflavin (F420-0) to form polyglutamated F420 derivatives, and the FMNH2-dependent reduction of dehydro-F420-0 to form F420-0. The sequence is that of Bifunctional F420 biosynthesis protein FbiB from Nocardia farcinica (strain IFM 10152).